A 213-amino-acid polypeptide reads, in one-letter code: Adenylate kinase (213 aa).

10-15 (GAGKGT) contributes to the ATP binding site. Residues 30–59 (STGDMFRAAIKEGTEMGKKAKEYMDKGALV) are NMP. Residues threonine 31, arginine 36, 57-59 (ALV), 85-88 (GFPR), and glutamine 92 contribute to the AMP site. The segment at 126–163 (GRRVCKNCGASYHVIFNPPQAEGKCNSCNGELYQRSDD) is LID. Arginine 127 is a binding site for ATP. 2 residues coordinate Zn(2+): cysteine 130 and cysteine 133. Residue 136–137 (SY) coordinates ATP. Zn(2+) is bound by residues cysteine 150 and cysteine 153. AMP contacts are provided by arginine 160 and arginine 171. Residue glutamine 199 participates in ATP binding.

Belongs to the adenylate kinase family. Monomer.

The protein localises to the cytoplasm. It carries out the reaction AMP + ATP = 2 ADP. It functions in the pathway purine metabolism; AMP biosynthesis via salvage pathway; AMP from ADP: step 1/1. Functionally, catalyzes the reversible transfer of the terminal phosphate group between ATP and AMP. Plays an important role in cellular energy homeostasis and in adenine nucleotide metabolism. This is Adenylate kinase from Desulforamulus reducens (strain ATCC BAA-1160 / DSM 100696 / MI-1) (Desulfotomaculum reducens).